We begin with the raw amino-acid sequence, 228 residues long: MKPSAVNQILQQTQHFFARFDVHLPPFAHFSPAVWQQLDRQPWQEVFDLKLGWDVTAFGDDDFARKGLTLFTLRNGSPGGKPYAKGYAEKIMHCREAQVTPMHFHWRKREDIINRGGGNLIVELHNADTRDGLAETAVTVTLDGCRQTHAAGSRLRLAPGESICLTPAIYHSFWGEEGFGDVLVGEVSTVNDDDNDNRFLQPLSRFSQIEEDQPPQWLLCHEYLRFIA.

The Mn(2+) site is built by H103, H105, E110, and H171.

It belongs to the D-lyxose ketol-isomerase family. In terms of assembly, homodimer. It depends on Mn(2+) as a cofactor.

It catalyses the reaction D-lyxose = D-xylulose. It carries out the reaction D-mannose = D-fructose. Its function is as follows. Sugar isomerase that catalyzes the reversible isomerization of D-lyxose to D-xylulose, and D-mannose to D-fructose. Shows optimum activity using D-lyxose as substrate, but can also effectively catalyze the isomerization between D-fructose and D-mannose. Shows lower activity with L-gulose, D-talose and L-ribose. The polypeptide is D-lyxose/D-mannose isomerase (Serratia proteamaculans).